We begin with the raw amino-acid sequence, 327 residues long: MYQSLMTVRETQIAIKEVKTFFEDQLAKRLELFRVSAPLFVTKKSGLNDHLNGVERPIEFDMLHSGEELEIVHSLAKWKRFALHEYGYEAGEGLYTNMNAIRRDEELDATHSIYVDQWDWEKIVQKEWRTVDYLQKTVLTIYGIFKDLEDHLFEKYPFLGKYLPEEIVFVTSQELEDKYPELTPKDREHAIAKEHGAVFIIGIGDALRSGEKHDGRAADYDDWKLNGDILFWHPVLQSSFELSSMGIRVDSKSLDEQLTKTGEDFKREYDFHKGILEDVLPLTIGGGIGQSRMCMYFLRKAHIGEVQSSVWPDDLREACKKENIHLF.

This sequence belongs to the class-II aminoacyl-tRNA synthetase family. AsnA subfamily.

The protein localises to the cytoplasm. It carries out the reaction L-aspartate + NH4(+) + ATP = L-asparagine + AMP + diphosphate + H(+). Its pathway is amino-acid biosynthesis; L-asparagine biosynthesis; L-asparagine from L-aspartate (ammonia route): step 1/1. The chain is Aspartate--ammonia ligase from Bacillus anthracis (strain A0248).